Here is a 498-residue protein sequence, read N- to C-terminus: DEAD-box ATP-dependent RNA helicase 6 (498 aa).

Residues 1 to 109 are disordered; sequence MDPRARYPPG…WKAQLKLPPQ (109 aa). Residues 33–49 are compositionally biased toward basic residues; the sequence is QHQHQHQQPPHPHHHQY. Composition is skewed to low complexity over residues 50–61 and 75–86; these read VQRQPQPQQTPH and AAEAAGASEQKA. Positions 124-152 match the Q motif motif; it reads NEFEDYFLKRELLMGIYEKGFERPSPIQE. The Helicase ATP-binding domain occupies 155–325; the sequence is IPIALTGSDI…DKYLPKPYVI (171 aa). Residue 168 to 175 coordinates ATP; the sequence is AKNGTGKT. Positions 273 to 276 match the DEAD box motif; the sequence is DEAD. In terms of domain architecture, Helicase C-terminal spans 335–495; the sequence is GITQFYAFVE…PIPPQIDRAI (161 aa).

Belongs to the DEAD box helicase family. DDX6/DHH1 subfamily.

It localises to the cytoplasm. The protein resides in the P-body. It catalyses the reaction ATP + H2O = ADP + phosphate + H(+). Its function is as follows. ATP-dependent RNA helicase involved in mRNA turnover, and more specifically in mRNA decapping. In Oryza sativa subsp. japonica (Rice), this protein is DEAD-box ATP-dependent RNA helicase 6.